We begin with the raw amino-acid sequence, 224 residues long: Ribosomal RNA large subunit methyltransferase E (224 aa).

The S-adenosyl-L-methionine site is built by Gly64, Trp66, Asp97, Asp113, and Asp138. The active-site Proton acceptor is the Lys178.

The protein belongs to the class I-like SAM-binding methyltransferase superfamily. RNA methyltransferase RlmE family.

Its subcellular location is the cytoplasm. It carries out the reaction uridine(2552) in 23S rRNA + S-adenosyl-L-methionine = 2'-O-methyluridine(2552) in 23S rRNA + S-adenosyl-L-homocysteine + H(+). Its function is as follows. Specifically methylates the uridine in position 2552 of 23S rRNA at the 2'-O position of the ribose in the fully assembled 50S ribosomal subunit. This chain is Ribosomal RNA large subunit methyltransferase E, found in Methylibium petroleiphilum (strain ATCC BAA-1232 / LMG 22953 / PM1).